A 351-amino-acid chain; its full sequence is Uroporphyrinogen decarboxylase (351 aa).

Residues 27-31 (RQAGR), D77, Y154, T209, and H327 contribute to the substrate site.

This sequence belongs to the uroporphyrinogen decarboxylase family. In terms of assembly, homodimer.

The protein resides in the cytoplasm. It carries out the reaction uroporphyrinogen III + 4 H(+) = coproporphyrinogen III + 4 CO2. Its pathway is porphyrin-containing compound metabolism; protoporphyrin-IX biosynthesis; coproporphyrinogen-III from 5-aminolevulinate: step 4/4. In terms of biological role, catalyzes the decarboxylation of four acetate groups of uroporphyrinogen-III to yield coproporphyrinogen-III. The chain is Uroporphyrinogen decarboxylase from Thioalkalivibrio sulfidiphilus (strain HL-EbGR7).